Reading from the N-terminus, the 496-residue chain is Apolipoprotein N-acyltransferase (496 aa).

The next 6 membrane-spanning stretches (helical) occupy residues 6–26 (IICL…FFIP), 50–70 (FGYL…SIGV), 77–97 (FWWA…FFIS), 114–134 (LIFC…LTGL), 148–168 (ILIQ…VIYI), and 183–203 (LKIL…YGAV). In terms of domain architecture, CN hydrolase spans 220 to 464 (VQPSIPQTAK…QGLIPQKLTT (245 aa)). Glu-259 serves as the catalytic Proton acceptor. Residue Lys-322 is part of the active site. The Nucleophile role is filled by Cys-372. The chain crosses the membrane as a helical span at residues 474-494 (FAMLLSIVFIILIHYLLSLIF).

It belongs to the CN hydrolase family. Apolipoprotein N-acyltransferase subfamily.

The protein resides in the cell inner membrane. It catalyses the reaction N-terminal S-1,2-diacyl-sn-glyceryl-L-cysteinyl-[lipoprotein] + a glycerophospholipid = N-acyl-S-1,2-diacyl-sn-glyceryl-L-cysteinyl-[lipoprotein] + a 2-acyl-sn-glycero-3-phospholipid + H(+). The protein operates within protein modification; lipoprotein biosynthesis (N-acyl transfer). Its function is as follows. Catalyzes the phospholipid dependent N-acylation of the N-terminal cysteine of apolipoprotein, the last step in lipoprotein maturation. This chain is Apolipoprotein N-acyltransferase, found in Rickettsia prowazekii (strain Madrid E).